The following is a 667-amino-acid chain: Phosphomethylpyrimidine synthase (667 aa).

Substrate is bound by residues Asn-235, Met-264, Tyr-293, His-329, 349–351 (SRG), 390–393 (DGMR), and Glu-429. His-433 provides a ligand contact to Zn(2+). Tyr-456 is a binding site for substrate. Zn(2+) is bound at residue His-497. Cys-577, Cys-580, and Cys-585 together coordinate [4Fe-4S] cluster. The disordered stretch occupies residues 618-642 (DSYTGSESDTAKRASQREQGMAQMS).

The protein belongs to the ThiC family. In terms of assembly, homodimer. It depends on [4Fe-4S] cluster as a cofactor.

It carries out the reaction 5-amino-1-(5-phospho-beta-D-ribosyl)imidazole + S-adenosyl-L-methionine = 4-amino-2-methyl-5-(phosphooxymethyl)pyrimidine + CO + 5'-deoxyadenosine + formate + L-methionine + 3 H(+). Its pathway is cofactor biosynthesis; thiamine diphosphate biosynthesis. Functionally, catalyzes the synthesis of the hydroxymethylpyrimidine phosphate (HMP-P) moiety of thiamine from aminoimidazole ribotide (AIR) in a radical S-adenosyl-L-methionine (SAM)-dependent reaction. In Shewanella pealeana (strain ATCC 700345 / ANG-SQ1), this protein is Phosphomethylpyrimidine synthase.